A 1288-amino-acid chain; its full sequence is Outer capsid protein lambda-2 (1288 aa).

An ATP-binding site is contributed by 892 to 899 (GAAAAGKS).

It belongs to the orthoreovirus lambda-2 protein family. In terms of assembly, interacts with protein mu-NS; in viral inclusions.

The protein localises to the virion. It carries out the reaction a 5'-end diphospho-ribonucleoside in mRNA + GTP + H(+) = a 5'-end (5'-triphosphoguanosine)-ribonucleoside in mRNA + diphosphate. The catalysed reaction is a 5'-end (5'-triphosphoguanosine)-ribonucleoside in mRNA + S-adenosyl-L-methionine = a 5'-end (N(7)-methyl 5'-triphosphoguanosine)-ribonucleoside in mRNA + S-adenosyl-L-homocysteine. Outer capsid protein involved in mRNA capping. Catalyzes the last 3 enzymatic activities for formation of the 5' cap structure on the viral plus-strand transcripts, namely the RNA guanylyltransferase, RNA-7N- and RNA-2'O-methyltransferase activities. This chain is Outer capsid protein lambda-2 (L2), found in Reovirus type 2 (strain D5/Jones) (T2J).